The following is a 147-amino-acid chain: Methylated-DNA--protein-cysteine methyltransferase (147 aa).

Cysteine 112 acts as the Nucleophile; methyl group acceptor in catalysis.

The protein belongs to the MGMT family.

It localises to the cytoplasm. The enzyme catalyses a 6-O-methyl-2'-deoxyguanosine in DNA + L-cysteinyl-[protein] = S-methyl-L-cysteinyl-[protein] + a 2'-deoxyguanosine in DNA. It carries out the reaction a 4-O-methyl-thymidine in DNA + L-cysteinyl-[protein] = a thymidine in DNA + S-methyl-L-cysteinyl-[protein]. Involved in the cellular defense against the biological effects of O6-methylguanine (O6-MeG) and O4-methylthymine (O4-MeT) in DNA. Repairs the methylated nucleobase in DNA by stoichiometrically transferring the methyl group to a cysteine residue in the enzyme. This is a suicide reaction: the enzyme is irreversibly inactivated. The sequence is that of Methylated-DNA--protein-cysteine methyltransferase from Archaeoglobus fulgidus (strain ATCC 49558 / DSM 4304 / JCM 9628 / NBRC 100126 / VC-16).